The chain runs to 912 residues: MKLKHLTIFLFIFIYRFLFVKSDCYLINNERPETKITKIRCDDQVISILLNPNNRTDATLEKDTDGKFYFDVVNFPYKDRLCDYTYDIYFLPEIPSLPSVPTIGGSVNFTYNYPCTSVYGRIKPLNIANKIVTPYNINLDQFTMRIQPGCGDLIINSGSRVIYNASYQTGDIPNKPTIDDQGNITIQGSNLYNTQIKINSNDPVENLNPTGNLDSTHSTIVFSLPESQYQGNWTIDVTICDVFYKSYLYTFLPIITVMEGVLNDNGGNLTFTGDHLSVNPSTTISGHFGGKPISCFAGTSKSVICSIPSRSEYGGSGYDVPLNVTIGKYTTNTIKISYDLPLIQGVSQRGTSQIFNVSGVYFSGVISMTIITGANIKTNILKKPTPTLEEPGFFIESNNTIFIFLPNNTQPGFMNLIVGDGGSKSFTSPRYNFKITPTITAGQSFKSNTIGGDLIISGIFMRTVDSDGRDVPLTVKSEPGGPICDPLKDGDGLSFTCVLKSGFGSSHTMNVYYNLLPVGSFVVSYNPPYLASSDQEKDGTIQINGNNLGESVSNSIITVVYLDGSRANGTVVESSHNLLTFQYPAGNKNTASYLFQLGDQISNMAGPFTLKPVIENNNPAVPCGGGMVTINGHYFFNYTKDTTTITIGKVPCNISSINVTTIECVILPNLKSLSPYYTSGSKPLIISSSNSATEKVYQSSITGYSNYTFAPPTITNTSDIDQTALITIYGTSFGDANLEILIDGKPCTQPEINIHTYSSLTCNVTNYDEMLKYNYSNTKFNISISVDGQYFIAQIFQFKYESTISYSENKSSGFPNEMYIGIVAIIIFLALIFFAIKTQVEKYIEERRARKAFRSVDNLRLKLREKHAAEIAKHYSFGYESAPKPNKSYFYDLGKKLSRLPLIRCCFKEHTD.

A signal peptide spans Met1–Ser22. The Extracellular segment spans residues Asp23–Pro815. Residues Asn54, Asn108, Asn164, Asn183, Asn232, Asn268, Asn323, Asn356, Asn398, Asn407, Asn568, Asn637, Asn653, Asn658, Asn706, Asn716, Asn763, Asn774, Asn781, and Asn809 are each glycosylated (N-linked (GlcNAc...) asparagine). IPT/TIG domains are found at residues Ser532–Thr609 and Pro612–Ile686. Positions Thr715–Phe796 constitute an IPT/TIG 3 domain. The helical transmembrane segment at Asn816–Ile836 threads the bilayer. Residues Lys837–Asp912 are Cytoplasmic-facing.

It is found in the cell membrane. The polypeptide is Tiger protein E1 (tgrE1) (Dictyostelium discoideum (Social amoeba)).